The sequence spans 333 residues: NADH-quinone oxidoreductase subunit H (333 aa).

8 helical membrane passes run 17 to 37, 88 to 108, 117 to 137, 159 to 179, 191 to 211, 241 to 261, 273 to 293, and 313 to 333; these read IFFA…TYGI, FILA…ALPF, IGVG…GVVT, ISYE…SGSL, VWFI…AVAE, FFML…TVLF, FIPG…LFIW, and VLLP…QLFF.

The protein belongs to the complex I subunit 1 family. As to quaternary structure, NDH-1 is composed of 14 different subunits. Subunits NuoA, H, J, K, L, M, N constitute the membrane sector of the complex.

Its subcellular location is the cell membrane. The enzyme catalyses a quinone + NADH + 5 H(+)(in) = a quinol + NAD(+) + 4 H(+)(out). Its function is as follows. NDH-1 shuttles electrons from NADH, via FMN and iron-sulfur (Fe-S) centers, to quinones in the respiratory chain. The immediate electron acceptor for the enzyme in this species is believed to be ubiquinone. Couples the redox reaction to proton translocation (for every two electrons transferred, four hydrogen ions are translocated across the cytoplasmic membrane), and thus conserves the redox energy in a proton gradient. This subunit may bind ubiquinone. The polypeptide is NADH-quinone oxidoreductase subunit H (Anoxybacillus flavithermus (strain DSM 21510 / WK1)).